The chain runs to 515 residues: Maturase K (515 aa).

Belongs to the intron maturase 2 family. MatK subfamily.

The protein localises to the plastid. Its subcellular location is the chloroplast. Usually encoded in the trnK tRNA gene intron. Probably assists in splicing its own and other chloroplast group II introns. In Sorghum bicolor (Sorghum), this protein is Maturase K.